Consider the following 25-residue polypeptide: Kunitz-type serine protease inhibitor 2 (25 aa).

In terms of domain architecture, BPTI/Kunitz inhibitor spans valine 6–tyrosine 25.

The protein resides in the secreted. In terms of biological role, inhibits bovine trypsin, human plasma kallikrein and human neutrophil elastase. The polypeptide is Kunitz-type serine protease inhibitor 2 (Rhipicephalus microplus (Cattle tick)).